A 158-amino-acid polypeptide reads, in one-letter code: Crossover junction endodeoxyribonuclease RuvC (158 aa).

Residues Asp-7, Glu-66, and Asp-139 contribute to the active site. The Mg(2+) site is built by Asp-7, Glu-66, and Asp-139.

It belongs to the RuvC family. In terms of assembly, homodimer which binds Holliday junction (HJ) DNA. The HJ becomes 2-fold symmetrical on binding to RuvC with unstacked arms; it has a different conformation from HJ DNA in complex with RuvA. In the full resolvosome a probable DNA-RuvA(4)-RuvB(12)-RuvC(2) complex forms which resolves the HJ. Mg(2+) is required as a cofactor.

It is found in the cytoplasm. The enzyme catalyses Endonucleolytic cleavage at a junction such as a reciprocal single-stranded crossover between two homologous DNA duplexes (Holliday junction).. Its function is as follows. The RuvA-RuvB-RuvC complex processes Holliday junction (HJ) DNA during genetic recombination and DNA repair. Endonuclease that resolves HJ intermediates. Cleaves cruciform DNA by making single-stranded nicks across the HJ at symmetrical positions within the homologous arms, yielding a 5'-phosphate and a 3'-hydroxyl group; requires a central core of homology in the junction. The consensus cleavage sequence is 5'-(A/T)TT(C/G)-3'. Cleavage occurs on the 3'-side of the TT dinucleotide at the point of strand exchange. HJ branch migration catalyzed by RuvA-RuvB allows RuvC to scan DNA until it finds its consensus sequence, where it cleaves and resolves the cruciform DNA. This chain is Crossover junction endodeoxyribonuclease RuvC, found in Nitratiruptor sp. (strain SB155-2).